Consider the following 311-residue polypeptide: tRNA-cytidine(32) 2-sulfurtransferase (311 aa).

The PP-loop motif motif lies at 47–52 (SGGKDS). [4Fe-4S] cluster-binding residues include Cys122, Cys125, and Cys213.

This sequence belongs to the TtcA family. As to quaternary structure, homodimer. Requires Mg(2+) as cofactor. The cofactor is [4Fe-4S] cluster.

Its subcellular location is the cytoplasm. It catalyses the reaction cytidine(32) in tRNA + S-sulfanyl-L-cysteinyl-[cysteine desulfurase] + AH2 + ATP = 2-thiocytidine(32) in tRNA + L-cysteinyl-[cysteine desulfurase] + A + AMP + diphosphate + H(+). It functions in the pathway tRNA modification. In terms of biological role, catalyzes the ATP-dependent 2-thiolation of cytidine in position 32 of tRNA, to form 2-thiocytidine (s(2)C32). The sulfur atoms are provided by the cysteine/cysteine desulfurase (IscS) system. This Escherichia coli O127:H6 (strain E2348/69 / EPEC) protein is tRNA-cytidine(32) 2-sulfurtransferase.